The sequence spans 180 residues: Kappa-casein (180 aa).

An N-terminal signal peptide occupies residues 1-21 (MMKHFLLVVNILAVTLPFLAA). O-linked (GalNAc...) threonine glycosylation is found at Thr132, Thr142, Thr147, and Thr153. Ser160 bears the Phosphoserine; alternate mark. Ser160 carries O-linked (GalNAc...) serine; alternate glycosylation.

This sequence belongs to the kappa-casein family. As to expression, mammary gland specific. Secreted in milk.

The protein resides in the secreted. Functionally, kappa-casein stabilizes micelle formation, preventing casein precipitation in milk. The protein is Kappa-casein (CSN3) of Oryctolagus cuniculus (Rabbit).